We begin with the raw amino-acid sequence, 259 residues long: Deoxyribose-phosphate aldolase (259 aa).

Aspartate 102 serves as the catalytic Proton donor/acceptor. The active-site Schiff-base intermediate with acetaldehyde is the lysine 167. Lysine 201 acts as the Proton donor/acceptor in catalysis.

This sequence belongs to the DeoC/FbaB aldolase family. DeoC type 2 subfamily.

The protein localises to the cytoplasm. The catalysed reaction is 2-deoxy-D-ribose 5-phosphate = D-glyceraldehyde 3-phosphate + acetaldehyde. It functions in the pathway carbohydrate degradation; 2-deoxy-D-ribose 1-phosphate degradation; D-glyceraldehyde 3-phosphate and acetaldehyde from 2-deoxy-alpha-D-ribose 1-phosphate: step 2/2. Functionally, catalyzes a reversible aldol reaction between acetaldehyde and D-glyceraldehyde 3-phosphate to generate 2-deoxy-D-ribose 5-phosphate. The polypeptide is Deoxyribose-phosphate aldolase (Escherichia coli O45:K1 (strain S88 / ExPEC)).